We begin with the raw amino-acid sequence, 258 residues long: MLSRRIIPCLDVRDGRVVKGVKFRDHIDMGDIVELALRYRAQGADELVFYDIGASPEGRSVDYTWVERVARLIDIPFCVAGGIGDVETARAVLHAGADKISINSPALGRPQLISELADAFGVQCVVVGIDSIREEDGQWRVRRYTGDPSKTQALPMRTLDWVAEAQRLGAGEIVLNCMDNDGVRRGYDIAQLRQVRALCRVPLIASGGAGEMQHFADVFDQADVDGALAASVFHSGAIPIPELKRFLRAQQIEVRDGQ.

Catalysis depends on residues D11 and D130.

It belongs to the HisA/HisF family. Heterodimer of HisH and HisF.

It localises to the cytoplasm. The enzyme catalyses 5-[(5-phospho-1-deoxy-D-ribulos-1-ylimino)methylamino]-1-(5-phospho-beta-D-ribosyl)imidazole-4-carboxamide + L-glutamine = D-erythro-1-(imidazol-4-yl)glycerol 3-phosphate + 5-amino-1-(5-phospho-beta-D-ribosyl)imidazole-4-carboxamide + L-glutamate + H(+). It participates in amino-acid biosynthesis; L-histidine biosynthesis; L-histidine from 5-phospho-alpha-D-ribose 1-diphosphate: step 5/9. In terms of biological role, IGPS catalyzes the conversion of PRFAR and glutamine to IGP, AICAR and glutamate. The HisF subunit catalyzes the cyclization activity that produces IGP and AICAR from PRFAR using the ammonia provided by the HisH subunit. The chain is Imidazole glycerol phosphate synthase subunit HisF from Xanthomonas euvesicatoria pv. vesicatoria (strain 85-10) (Xanthomonas campestris pv. vesicatoria).